The chain runs to 648 residues: Macrolide export ATP-binding/permease protein MacB (648 aa).

In terms of domain architecture, ABC transporter spans 5-243 (LELCNVSRSY…QGVDAAVVNT (239 aa)). ATP is bound at residue 41-48 (GVSGSGKS). 5 helical membrane-spanning segments follow: residues 273 to 293 (LLTM…VVVG), 417 to 437 (ANVV…IGVA), 523 to 543 (LFLT…VMNI), 578 to 598 (LVCL…AFML), and 611 to 631 (LTAL…FGWL).

This sequence belongs to the ABC transporter superfamily. Macrolide exporter (TC 3.A.1.122) family. Homodimer. Part of the tripartite efflux system MacAB-TolC, which is composed of an inner membrane transporter, MacB, a periplasmic membrane fusion protein, MacA, and an outer membrane component, TolC. The complex forms a large protein conduit and can translocate molecules across both the inner and outer membranes. Interacts with MacA.

The protein localises to the cell inner membrane. In terms of biological role, part of the tripartite efflux system MacAB-TolC. MacB is a non-canonical ABC transporter that contains transmembrane domains (TMD), which form a pore in the inner membrane, and an ATP-binding domain (NBD), which is responsible for energy generation. Confers resistance against macrolides. The sequence is that of Macrolide export ATP-binding/permease protein MacB from Salmonella paratyphi A (strain ATCC 9150 / SARB42).